The chain runs to 383 residues: MKQAFSERISSALTLRKQAGLTRARTVIEQGNQSRLSVDGKSYLNFSGNDYLGLAGSQELTQAWQQGLSLYGSGSGASPLVTGYSKPHADLESQLAEWLGFDCAVLFNSGFSANQAVLFSLLEKGDQVVQDKLNHASLMEAGILSPASMKRFKHNDVAHLDKLLKASICNPSLVVTEGVFSMDGDLSPLSELSRVTKENNAWFMVDDAHGCGVLGSHGRGCCDLYQITPDILVVTFGKAFGLSGAAVLCNVECGDYLSQFARHHVYSTAMPPAQAHALSHALSMIQQQEWRRKKLDELSQQFESELRLCVGVITTQTPIKPIIIGDSETAIALSDSLKEKGMWTTAIRPPTVPLGTARLRVTLSANHSEKDIKLLTQAITELR.

Residue Arg-23 coordinates substrate. 110–111 (GF) is a pyridoxal 5'-phosphate binding site. A substrate-binding site is contributed by His-135. Residues Ser-181, His-209, and Thr-235 each contribute to the pyridoxal 5'-phosphate site. An N6-(pyridoxal phosphate)lysine modification is found at Lys-238. Thr-351 is a binding site for substrate.

This sequence belongs to the class-II pyridoxal-phosphate-dependent aminotransferase family. BioF subfamily. Homodimer. It depends on pyridoxal 5'-phosphate as a cofactor.

It catalyses the reaction 6-carboxyhexanoyl-[ACP] + L-alanine + H(+) = (8S)-8-amino-7-oxononanoate + holo-[ACP] + CO2. It functions in the pathway cofactor biosynthesis; biotin biosynthesis. In terms of biological role, catalyzes the decarboxylative condensation of pimeloyl-[acyl-carrier protein] and L-alanine to produce 8-amino-7-oxononanoate (AON), [acyl-carrier protein], and carbon dioxide. In Aliivibrio salmonicida (strain LFI1238) (Vibrio salmonicida (strain LFI1238)), this protein is 8-amino-7-oxononanoate synthase.